The primary structure comprises 2368 residues: Highly reducing polyketide synthase cla2 (2368 aa).

In terms of domain architecture, Ketosynthase family 3 (KS3) spans Q10 to A434. Catalysis depends on for beta-ketoacyl synthase activity residues C182, H317, and H357. Positions F548–L877 are malonyl-CoA:ACP transacylase (MAT) domain. S638 (for malonyltransferase activity) is an active-site residue. The segment at H936–K1071 is N-terminal hotdog fold. The interval H936–T1175 is dehydratase (DH) domain. One can recognise a PKS/mFAS DH domain in the interval H936 to A1255. H968 (proton acceptor; for dehydratase activity) is an active-site residue. The segment at P1099–A1255 is C-terminal hotdog fold. The active-site Proton donor; for dehydratase activity is D1165. The segment at G1655–L1967 is enoylreductase (ER) domain. Residues A1991–R2170 are catalytic ketoreductase (KRc) domain. One can recognise a Carrier domain in the interval Q2283 to S2360. S2320 bears the O-(pantetheine 4'-phosphoryl)serine mark.

It participates in secondary metabolite biosynthesis. Its function is as follows. Highly reducing polyketide synthase; part of the gene cluster that mediates the biosynthesis of cladosporin, a tricyclic octaketide that acts as an antimalarial agent though inhibition of the Plasmodium falciparum lysyl-tRNA synthetase. The highly reducing polyketide synthase cla2 is responsible for biosynthesis up to the pentaketide stage, including of the tetrahydropyran (THP) ring, whereas the three subsequent ketide extensions with no reduction are catalyzed by the non-reducing polyketide synthase cla3. The polypeptide is Highly reducing polyketide synthase cla2 (Cladosporium cladosporioides).